A 259-amino-acid chain; its full sequence is MRILISNDDGIQAEGINALRACLQEQNEIYIVAPDRERSATGHKITMHRPLRVKEWHYPEAKTVGWAVDGTPADCVKLGLEALLPAPPDLVISGINLGPNLGTDVLYSGTVSAAIEGIINGIPAIAVSLASYDYRDFSFSGKLIKELVSAFGNRLPDKTLLNINVPPGKPCGIKVTRLGNRRYINIFDKRTDPRGRVYYWMAGEPFDLDEDDPDTDVWAVKEGYVSITPVHFDLTDYKIMERLKKLLKTAKILNRELKD.

A divalent metal cation contacts are provided by D8, D9, S39, and N96.

The protein belongs to the SurE nucleotidase family. The cofactor is a divalent metal cation.

The protein resides in the cytoplasm. It carries out the reaction a ribonucleoside 5'-phosphate + H2O = a ribonucleoside + phosphate. Nucleotidase that shows phosphatase activity on nucleoside 5'-monophosphates. In Pelotomaculum thermopropionicum (strain DSM 13744 / JCM 10971 / SI), this protein is 5'-nucleotidase SurE.